A 152-amino-acid polypeptide reads, in one-letter code: Peptide deformylase (152 aa).

Fe cation is bound by residues cysteine 88 and histidine 130. Glutamate 131 is a catalytic residue. Histidine 134 provides a ligand contact to Fe cation.

This sequence belongs to the polypeptide deformylase family. Fe(2+) serves as cofactor.

It catalyses the reaction N-terminal N-formyl-L-methionyl-[peptide] + H2O = N-terminal L-methionyl-[peptide] + formate. Removes the formyl group from the N-terminal Met of newly synthesized proteins. Requires at least a dipeptide for an efficient rate of reaction. N-terminal L-methionine is a prerequisite for activity but the enzyme has broad specificity at other positions. The sequence is that of Peptide deformylase from Carboxydothermus hydrogenoformans (strain ATCC BAA-161 / DSM 6008 / Z-2901).